A 381-amino-acid polypeptide reads, in one-letter code: Transcription termination factor 4, mitochondrial (381 aa).

Residues 1-42 constitute a mitochondrion transit peptide; it reads MAAFGRQVLDWHRLIPLTWACMARQTPHLGEQRRTTASLLRK. MTERF repeat units lie at residues 142–172, 177–204, 209–239, 245–270, and 290–318; these read CVVLKKSPQLLKLPIMQMRKRSSYLQKLGLG, KRVLYCCPEIFTMRQQDINDTVRLLKEK, VQQVTKILHSCPSVLREDLGQLEYKFQYAYF, HPDIVKSEYLQYSLTKIKQRHIYLER, and LKDILRVSEAEFLARTACTSVEEFQVFKK. Residues 310-327 form a dimerization with NSUN4 region; that stretch reads VEEFQVFKKLLAREEEES. The tract at residues 322–381 is disordered; that stretch reads REEEESESSTSDDKRASLDEDEDDDDEEDNDEDDNDEDDDDEDDDEAEDNDEDEDDDEEE. A compositionally biased stretch (acidic residues) spans 340–381; the sequence is DEDEDDDDEEDNDEDDNDEDDDDEDDDEAEDNDEDEDDDEEE.

This sequence belongs to the mTERF family. Heterodimer with NSUN4; this interaction may be required for NSUN4 recruitment to the mitochondrial large ribosomal subunit. Post-translationally, the mature mitochondrial protein exists in 2 forms differing at the level of their N-terminus, one is starting at residue 43 and the other at residue 48.

Its subcellular location is the mitochondrion. Its function is as follows. Regulator of mitochondrial ribosome biogenesis and translation. Binds to mitochondrial ribosomal RNAs 16S, 12S and 7S and targets NSUN4 RNA methyltransferase to the mitochondrial large ribosomal subunit (39S). This is Transcription termination factor 4, mitochondrial (MTERF4) from Homo sapiens (Human).